The following is a 329-amino-acid chain: DNA-directed RNA polymerase subunit alpha (329 aa).

The tract at residues 1 to 231 is alpha N-terminal domain (alpha-NTD); that stretch reads MQTTLLKPKT…EQLAVFAQLE (231 aa). The tract at residues 249–329 is alpha C-terminal domain (alpha-CTD); the sequence is FDPILLRPVD…SWPPAGLDKR (81 aa).

It belongs to the RNA polymerase alpha chain family. As to quaternary structure, homodimer. The RNAP catalytic core consists of 2 alpha, 1 beta, 1 beta' and 1 omega subunit. When a sigma factor is associated with the core the holoenzyme is formed, which can initiate transcription.

The catalysed reaction is RNA(n) + a ribonucleoside 5'-triphosphate = RNA(n+1) + diphosphate. Functionally, DNA-dependent RNA polymerase catalyzes the transcription of DNA into RNA using the four ribonucleoside triphosphates as substrates. The sequence is that of DNA-directed RNA polymerase subunit alpha from Variovorax paradoxus (strain S110).